A 455-amino-acid chain; its full sequence is Argininosuccinate synthase (455 aa).

ATP contacts are provided by residues 17 to 25 (AFSGGLDTS) and Ala-43. Residue Tyr-99 participates in L-citrulline binding. 2 residues coordinate ATP: Gly-129 and Thr-131. Residues Thr-131, Asn-135, and Asp-136 each contribute to the L-aspartate site. An L-citrulline-binding site is contributed by Asn-135. Asp-136 is an ATP binding site. L-citrulline-binding residues include Arg-139 and Ser-192. Asp-194 lines the ATP pocket. Residues Thr-201, Glu-203, and Glu-280 each coordinate L-citrulline. Residues 434-448 (TGLPQVDNNNLSSGR) show a composition bias toward polar residues. The tract at residues 434–455 (TGLPQVDNNNLSSGRGLQDKRQ) is disordered.

This sequence belongs to the argininosuccinate synthase family. Type 2 subfamily. Homotetramer.

It is found in the cytoplasm. It carries out the reaction L-citrulline + L-aspartate + ATP = 2-(N(omega)-L-arginino)succinate + AMP + diphosphate + H(+). It participates in amino-acid biosynthesis; L-arginine biosynthesis; L-arginine from L-ornithine and carbamoyl phosphate: step 2/3. This is Argininosuccinate synthase (argG) from Yersinia pestis.